A 156-amino-acid polypeptide reads, in one-letter code: Protein LlR18A (156 aa).

Trans-zeatin contacts are provided by Asn8 and Asp28. Ca(2+)-binding residues include Pro32 and Ile38. 3 residues coordinate trans-zeatin: Lys54, Asp133, and Lys136.

Belongs to the BetVI family. In terms of tissue distribution, expressed constitutively in roots.

It localises to the cytoplasm. The protein localises to the cytosol. Its function is as follows. Class II ribonuclease (RNase). Binds to cytokinins. Interacts with melatonin. The sequence is that of Protein LlR18A (LLR18A) from Lupinus luteus (European yellow lupine).